The primary structure comprises 477 residues: Pentatricopeptide repeat-containing protein At1g55630 (477 aa).

9 PPR repeats span residues 151–185, 186–220, 221–255, 256–290, 291–325, 326–360, 361–395, 396–430, and 431–465; these read TANC…GYPT, TACT…NYRP, YKHS…GFTP, DVLT…GFSP, DLYT…GVEP, GVIH…GCTP, DVVC…GQLP, NVFT…GCNP, and NFVV…GHYV.

The protein belongs to the PPR family. P subfamily.

The chain is Pentatricopeptide repeat-containing protein At1g55630 from Arabidopsis thaliana (Mouse-ear cress).